Reading from the N-terminus, the 712-residue chain is Cyclolysin secretion/processing ATP-binding protein CyaB (712 aa).

A Peptidase C39 domain is found at 7-128; the sequence is QCASVPDSGL…ALWAGELLLC (122 aa). The 283-residue stretch at 157-439 folds into the ABC transmembrane type-1 domain; sequence IGEVLLISLV…LAQLWNDFQQ (283 aa). 6 helical membrane passes run 160–180, 194–214, 272–292, 298–318, 367–387, and 390–410; these read VLLI…FFQV, LNVI…LTGI, AVTV…MFFY, LVVL…TPVL, VAAG…VTLI, and LVAL…RMTV. The ABC transporter domain occupies 471 to 706; it reads IELDRVSFRY…GGLYARLQAL (236 aa). Residue 505–512 coordinates ATP; that stretch reads GRSGSGKS.

Belongs to the ABC transporter superfamily. Cyclolysin exporter (TC 3.A.1.109.2) family.

The protein resides in the cell membrane. Its function is as follows. Involved in the export of calmodulin-sensitive adenylate cyclase-hemolysin (cyclolysin). The protein is Cyclolysin secretion/processing ATP-binding protein CyaB (cyaB) of Bordetella pertussis (strain ATCC 9797 / DSM 5571 / CCUG 30873 / LMG 14455 / NCTC 10739 / 18323).